Consider the following 523-residue polypeptide: Nondiscriminating glutamyl-tRNA synthetase EARS2, mitochondrial (523 aa).

A mitochondrion-targeting transit peptide spans 1 to 41 (MAALLRRLLQRERPSAASGRPVGRREANLGTDAGVAVRVRF). 40-42 (RFA) serves as a coordination point for L-glutamate. A 'HIGH' region motif is present at residues 45 to 53 (PTGFLHLGG). His50 contributes to the ATP binding site. L-glutamate contacts are provided by residues Glu76, 228-232 (YHLAC), and Arg246. Glu249 lines the ATP pocket. Lys256 is subject to N6-succinyllysine. 284-288 (KLSKR) is an ATP binding site. The 'KMSKS' region signature appears at 284-288 (KLSKR). Residue Lys486 is modified to N6-acetyllysine.

It belongs to the class-I aminoacyl-tRNA synthetase family. Glutamate--tRNA ligase type 1 subfamily.

The protein localises to the mitochondrion matrix. It carries out the reaction tRNA(Glx) + L-glutamate + ATP = L-glutamyl-tRNA(Glx) + AMP + diphosphate. The enzyme catalyses tRNA(Glu) + L-glutamate + ATP = L-glutamyl-tRNA(Glu) + AMP + diphosphate. The catalysed reaction is tRNA(Gln) + L-glutamate + ATP = L-glutamyl-tRNA(Gln) + AMP + diphosphate. Its function is as follows. Non-discriminating glutamyl-tRNA synthetase that catalyzes aminoacylation of both mitochondrial tRNA(Glu) and tRNA(Gln) and participates in RNA aminoacylation for mitochondrial protein translation. Attachs glutamate to tRNA(Glu) or tRNA(Gln) in a two-step reaction: glutamate is first activated by ATP to form Glu-AMP and then transferred to the acceptor end of tRNA(Glu) or tRNA(Gln). In vitro, cytoplasmic tRNA(Gln) is slightly glutamylated, but with low activity. This chain is Nondiscriminating glutamyl-tRNA synthetase EARS2, mitochondrial, found in Homo sapiens (Human).